The sequence spans 264 residues: Protein-lysine methyltransferase METTL21C (264 aa).

Residues 1 to 10 (MDVCLSSAQQ) are compositionally biased toward polar residues. The tract at residues 1 to 46 (MDVCLSSAQQPGRRGEGLSSPGGWLEAEKKGAPQKDSTGGVLEESN) is disordered. S-adenosyl-L-methionine-binding positions include Trp-92, 120-122 (GAG), Asp-141, Trp-172, and Ser-193.

The protein belongs to the methyltransferase superfamily. METTL21 family. Interacts with members of the heat shock protein 70 families; these proteins may possibly be methylation substrates for the enzyme.

It localises to the nucleus. It is found in the cytoplasm. The catalysed reaction is L-lysyl-[protein] + S-adenosyl-L-methionine = N(6)-methyl-L-lysyl-[protein] + S-adenosyl-L-homocysteine + H(+). It carries out the reaction N(6)-methyl-L-lysyl-[protein] + S-adenosyl-L-methionine = N(6),N(6)-dimethyl-L-lysyl-[protein] + S-adenosyl-L-homocysteine + H(+). The enzyme catalyses N(6),N(6)-dimethyl-L-lysyl-[protein] + S-adenosyl-L-methionine = N(6),N(6),N(6)-trimethyl-L-lysyl-[protein] + S-adenosyl-L-homocysteine + H(+). Protein-lysine N-methyltransferase using S-adenosyl-L-methionine as methyl donor. Mono-di and trimethylates 'Lys-943' of AARS1. This Homo sapiens (Human) protein is Protein-lysine methyltransferase METTL21C.